The following is a 246-amino-acid chain: 1-(5-phosphoribosyl)-5-[(5-phosphoribosylamino)methylideneamino] imidazole-4-carboxamide isomerase (246 aa).

The Proton acceptor role is filled by D8. Catalysis depends on D131, which acts as the Proton donor.

It belongs to the HisA/HisF family.

The protein resides in the cytoplasm. It catalyses the reaction 1-(5-phospho-beta-D-ribosyl)-5-[(5-phospho-beta-D-ribosylamino)methylideneamino]imidazole-4-carboxamide = 5-[(5-phospho-1-deoxy-D-ribulos-1-ylimino)methylamino]-1-(5-phospho-beta-D-ribosyl)imidazole-4-carboxamide. It participates in amino-acid biosynthesis; L-histidine biosynthesis; L-histidine from 5-phospho-alpha-D-ribose 1-diphosphate: step 4/9. The chain is 1-(5-phosphoribosyl)-5-[(5-phosphoribosylamino)methylideneamino] imidazole-4-carboxamide isomerase from Lactococcus lactis subsp. cremoris (strain MG1363).